A 309-amino-acid chain; its full sequence is Ribonuclease Z (309 aa).

Residues His63, His65, Asp67, His68, His141, Asp208, and His266 each coordinate Zn(2+). The active-site Proton acceptor is Asp67.

Belongs to the RNase Z family. In terms of assembly, homodimer. The cofactor is Zn(2+).

It catalyses the reaction Endonucleolytic cleavage of RNA, removing extra 3' nucleotides from tRNA precursor, generating 3' termini of tRNAs. A 3'-hydroxy group is left at the tRNA terminus and a 5'-phosphoryl group is left at the trailer molecule.. In terms of biological role, zinc phosphodiesterase, which displays some tRNA 3'-processing endonuclease activity. Probably involved in tRNA maturation, by removing a 3'-trailer from precursor tRNA. This Salinispora arenicola (strain CNS-205) protein is Ribonuclease Z.